The sequence spans 310 residues: Methionyl-tRNA formyltransferase (310 aa).

110 to 113 (SVLP) is a binding site for (6S)-5,6,7,8-tetrahydrofolate.

Belongs to the Fmt family.

The enzyme catalyses L-methionyl-tRNA(fMet) + (6R)-10-formyltetrahydrofolate = N-formyl-L-methionyl-tRNA(fMet) + (6S)-5,6,7,8-tetrahydrofolate + H(+). Its function is as follows. Attaches a formyl group to the free amino group of methionyl-tRNA(fMet). The formyl group appears to play a dual role in the initiator identity of N-formylmethionyl-tRNA by promoting its recognition by IF2 and preventing the misappropriation of this tRNA by the elongation apparatus. The sequence is that of Methionyl-tRNA formyltransferase from Mycolicibacterium vanbaalenii (strain DSM 7251 / JCM 13017 / BCRC 16820 / KCTC 9966 / NRRL B-24157 / PYR-1) (Mycobacterium vanbaalenii).